Here is a 388-residue protein sequence, read N- to C-terminus: MQRITVLGATGTIGVNTLDVIARHPERFSVFALTGHRQVDRLAGQCRQFRPQVAVVADAAAAGELARQLSGMNVEILHGEAALVAVAASGSVDAVMSAIVGAAGLAPTMAAVRAGKQVYLANKESLVVAGRLMMEAVAASGSRLLPIDSEHNAIFQSLPADFSGDLDASGVERIVLTASGGPFRGWSAQQLAHVTPEQAVAHPNWVMGRKISVDSASLMNKGLEVIEARWLFNAPPGRIEVIVHPQSVIHSMVRYRDGSVVAQLGVPDMRTPIAHALAWPERMDAGVPALDFSLLGGLTFEKPDQEHFPCLGLAFDALREGGDQPAVLNAANEVAVAAFLEKRLAFMDIPRLVQKAMHQFAGRVSNSIEELLELDAEVRRHLLCSLAN.

The NADPH site is built by T10, G11, T12, I13, R37, Q38, and N122. K123 serves as a coordination point for 1-deoxy-D-xylulose 5-phosphate. E124 serves as a coordination point for NADPH. D148 lines the Mn(2+) pocket. Positions 149, 150, 179, and 202 each coordinate 1-deoxy-D-xylulose 5-phosphate. Residue E150 participates in Mn(2+) binding. Position 208 (G208) interacts with NADPH. Positions 215, 220, 221, and 224 each coordinate 1-deoxy-D-xylulose 5-phosphate. E224 contributes to the Mn(2+) binding site.

It belongs to the DXR family. It depends on Mg(2+) as a cofactor. Mn(2+) serves as cofactor.

The catalysed reaction is 2-C-methyl-D-erythritol 4-phosphate + NADP(+) = 1-deoxy-D-xylulose 5-phosphate + NADPH + H(+). It participates in isoprenoid biosynthesis; isopentenyl diphosphate biosynthesis via DXP pathway; isopentenyl diphosphate from 1-deoxy-D-xylulose 5-phosphate: step 1/6. In terms of biological role, catalyzes the NADPH-dependent rearrangement and reduction of 1-deoxy-D-xylulose-5-phosphate (DXP) to 2-C-methyl-D-erythritol 4-phosphate (MEP). This chain is 1-deoxy-D-xylulose 5-phosphate reductoisomerase, found in Laribacter hongkongensis (strain HLHK9).